The chain runs to 210 residues: Large ribosomal subunit protein uL3 (210 aa).

The disordered stretch occupies residues 131–154 (GPMSHGSKYHRRVGSMGATTDPGR).

It belongs to the universal ribosomal protein uL3 family. Part of the 50S ribosomal subunit. Forms a cluster with proteins L14 and L19.

Its function is as follows. One of the primary rRNA binding proteins, it binds directly near the 3'-end of the 23S rRNA, where it nucleates assembly of the 50S subunit. This chain is Large ribosomal subunit protein uL3, found in Thermoanaerobacter pseudethanolicus (strain ATCC 33223 / 39E) (Clostridium thermohydrosulfuricum).